Here is a 250-residue protein sequence, read N- to C-terminus: Bacteriorhodopsin (250 aa).

Topologically, residues 1–18 are extracellular; it reads MCCAALAPPMAATVGPES. The chain crosses the membrane as a helical span at residues 19 to 37; the sequence is IWLWIGTIGMTLGTLYFVG. Topologically, residues 38–51 are cytoplasmic; sequence RGRGVRDRKMQEFY. Residues 52-70 traverse the membrane as a helical segment; that stretch reads IITIFITTIAAAMYFAMAT. Residues 71–86 lie on the Extracellular side of the membrane; the sequence is GFGVTEVMVGDEALTI. The chain crosses the membrane as a helical span at residues 87 to 104; the sequence is YWARYADWLFTTPLLLLD. Topologically, residues 105–115 are cytoplasmic; the sequence is LSLLAGANRNT. The helical transmembrane segment at 116-135 threads the bilayer; it reads IATLIGLDVFMIGTGAIAAL. At 136-142 the chain is on the extracellular side; the sequence is SSTPGTR. The helical transmembrane segment at 143-162 threads the bilayer; that stretch reads IAWWAISTGALLALLYVLVG. The Cytoplasmic portion of the chain corresponds to 163–180; it reads TLSENARNRAPEVASLFG. A helical transmembrane segment spans residues 181–199; that stretch reads RLRNLVIALWFLYPVVWIL. At 200–212 the chain is on the extracellular side; that stretch reads GTEGTFGILPLYW. The chain crosses the membrane as a helical span at residues 213 to 232; sequence ETAAFMVLDLSAKVGFGVIL. N6-(retinylidene)lysine is present on Lys-225. Topologically, residues 233–250 are cytoplasmic; that stretch reads LQSRSVLERVATPTAAPT.

Belongs to the archaeal/bacterial/fungal opsin family.

The protein resides in the cell membrane. Light-driven proton pump. The chain is Bacteriorhodopsin (bop) from Haloterrigena sp. (strain arg-4).